Consider the following 177-residue polypeptide: Adenine phosphoribosyltransferase (177 aa).

The protein belongs to the purine/pyrimidine phosphoribosyltransferase family. Homodimer.

Its subcellular location is the cytoplasm. It carries out the reaction AMP + diphosphate = 5-phospho-alpha-D-ribose 1-diphosphate + adenine. Its pathway is purine metabolism; AMP biosynthesis via salvage pathway; AMP from adenine: step 1/1. In terms of biological role, catalyzes a salvage reaction resulting in the formation of AMP, that is energically less costly than de novo synthesis. This chain is Adenine phosphoribosyltransferase, found in Mycoplasma pneumoniae (strain ATCC 29342 / M129 / Subtype 1) (Mycoplasmoides pneumoniae).